The primary structure comprises 437 residues: Serine--tRNA ligase (437 aa).

Residue 244 to 246 (TAE) coordinates L-serine. 275–277 (RSE) is a binding site for ATP. Residue glutamate 298 coordinates L-serine. 362 to 365 (EISS) lines the ATP pocket. Serine 397 is a binding site for L-serine.

The protein belongs to the class-II aminoacyl-tRNA synthetase family. Type-1 seryl-tRNA synthetase subfamily. Homodimer. The tRNA molecule binds across the dimer.

The protein localises to the cytoplasm. The catalysed reaction is tRNA(Ser) + L-serine + ATP = L-seryl-tRNA(Ser) + AMP + diphosphate + H(+). It catalyses the reaction tRNA(Sec) + L-serine + ATP = L-seryl-tRNA(Sec) + AMP + diphosphate + H(+). Its pathway is aminoacyl-tRNA biosynthesis; selenocysteinyl-tRNA(Sec) biosynthesis; L-seryl-tRNA(Sec) from L-serine and tRNA(Sec): step 1/1. Catalyzes the attachment of serine to tRNA(Ser). Is also able to aminoacylate tRNA(Sec) with serine, to form the misacylated tRNA L-seryl-tRNA(Sec), which will be further converted into selenocysteinyl-tRNA(Sec). The protein is Serine--tRNA ligase of Nitrosomonas eutropha (strain DSM 101675 / C91 / Nm57).